A 295-amino-acid chain; its full sequence is tRNA pseudouridine synthase A (295 aa).

D67 acts as the Nucleophile in catalysis. Residue Y125 coordinates substrate.

It belongs to the tRNA pseudouridine synthase TruA family. Homodimer.

It carries out the reaction uridine(38/39/40) in tRNA = pseudouridine(38/39/40) in tRNA. Formation of pseudouridine at positions 38, 39 and 40 in the anticodon stem and loop of transfer RNAs. The sequence is that of tRNA pseudouridine synthase A from Prochlorococcus marinus (strain MIT 9303).